The primary structure comprises 233 residues: Zinc metalloproteinase recombinant fibrinogenase II (233 aa).

The region spanning 19 to 215 is the Peptidase M12B domain; that stretch reads KYVETVFVVD…HNPECIDNEP (197 aa). Residues Glu22 and Asp106 each coordinate Ca(2+). 3 cysteine pairs are disulfide-bonded: Cys130/Cys210, Cys170/Cys194, and Cys172/Cys177. His155 contributes to the Zn(2+) binding site. Glu156 is an active-site residue. Residues His159 and His165 each coordinate Zn(2+). Asn193 carries N-linked (GlcNAc...) asparagine glycosylation. Ca(2+) contacts are provided by Cys210, Asn213, Asn228, Leu230, and Glu232.

Belongs to the venom metalloproteinase (M12B) family. P-III subfamily. Requires Zn(2+) as cofactor. In terms of tissue distribution, expressed by the venom gland.

It localises to the secreted. Inhibited by PMSF and EDTA. Slightly inhibited by Cu(2+) and Zn(2+). Not inhibited by aprotinin, SBTI, Ca(2+), Mg(2+), Na(+) and K(+). Its function is as follows. Snake venom zinc metalloprotease that acts at several levels. It has direct fibrino(geno)lytic activity (Aalpha chain of fibrinogen is cleaved quickly, Bbeta chain slowly, and gamma chain even more slowly) and degradation of TNF-alpha. These activities permit to protect against sepsis and disseminated intravascular coagulation. It inhibits ADP-induced platelet aggregation in human platelet-rich plasma (IC(50)=65.4 ug/ml). It decreases the activity of complement by degrading human C5, C6 and C9 in vitro, decreasing serum levels of C1q, C3 and C4 in rat, and inhibiting the MAC deposition on HUVECs membrane. This inhibition of complement protects against hyperacute rejection that is the main barrier in xenotransplantation. Has preference for Lys at the P1 position. Cleaves insulin B chain at '36-Val-|-Glu-37', '39-Leu-|-Tyr-40', and '48-Phe-|-Phe-49' bonds. Also cleaves fibronectin and type IV collagen. In Deinagkistrodon acutus (Hundred-pace snake), this protein is Zinc metalloproteinase recombinant fibrinogenase II.